The following is a 56-amino-acid chain: Turripeptide XIV-01 (56 aa).

An N-terminal signal peptide occupies residues 1-21 (MRFHVLLTVALLLTSLMSIEA). The propeptide occupies 22–30 (KPVNGAEME).

Contains 2 disulfide bonds. As to expression, expressed by the venom duct.

It localises to the secreted. In Gemmula speciosa (Splendid gem-turris), this protein is Turripeptide XIV-01.